Here is a 550-residue protein sequence, read N- to C-terminus: Parathyroid hormone 2 receptor (550 aa).

The N-terminal stretch at 1–24 (MAGLGASLHVWGWLMLGSCLLARA) is a signal peptide. Residues 27 to 145 (DSDGTITIEE…GKQEFFERLY (119 aa)) lie on the Extracellular side of the membrane. N-linked (GlcNAc...) asparagine glycosylation is found at asparagine 51, asparagine 106, asparagine 116, and asparagine 121. A helical transmembrane segment spans residues 146 to 169 (VMYTVGYSISFGSLAVAILIIGYF). Residues 170–176 (RRLHCTR) are Cytoplasmic-facing. A helical membrane pass occupies residues 177 to 196 (NYIHMHLFVSFMLRATSIFV). Residues 197-237 (KDRVVHAHIGVKELESLIMQDDPQNSIEATSVDKSQYIGCK) are Extracellular-facing. Residues 238–260 (IAVVMFIYFLATNYYWILVEGLY) form a helical membrane-spanning segment. Residues 261–275 (LHNLIFVAFFSDTKY) lie on the Cytoplasmic side of the membrane. Residues 276-297 (LWGFILIGWGFPAAFVAAWAVA) traverse the membrane as a helical segment. At 298–316 (RATLADARCWELSAGDIKW) the chain is on the extracellular side. A helical transmembrane segment spans residues 317-337 (IYQAPILAAIGLNFILFLNTV). Residues 338 to 364 (RVLATKIWETNAVGHDTRKQYRKLAKS) are Cytoplasmic-facing. A helical membrane pass occupies residues 365–383 (TLVLVLVFGVHYIVFVCLP). Residues 384 to 394 (HSFTGLGWEIR) lie on the Extracellular side of the membrane. A helical membrane pass occupies residues 395–417 (MHCELFFNSFQGFFVSIIYCYCN). The Cytoplasmic portion of the chain corresponds to 418–550 (GEVQAEVKKM…GCQGETEDVL (133 aa)). Positions 511–531 (EETKEDSGRQGDDILMEKPSR) are enriched in basic and acidic residues. Residues 511 to 550 (EETKEDSGRQGDDILMEKPSRPMESNPDTEGCQGETEDVL) form a disordered region.

This sequence belongs to the G-protein coupled receptor 2 family. In terms of assembly, binds to TIPF39/TIP39. Expressed abundantly in brain and pancreas. Also expressed in the testis.

It is found in the cell membrane. Functionally, this is a specific receptor for parathyroid hormone. The activity of this receptor is mediated by G proteins which activate adenylyl cyclase. PTH2R may be responsible for PTH effects in a number of physiological systems. It may play a significant role in pancreatic function. PTH2R presence in neurons indicates that it may function as a neurotransmitter receptor. In Homo sapiens (Human), this protein is Parathyroid hormone 2 receptor (PTH2R).